The sequence spans 183 residues: CASP-like protein UU1 (183 aa).

Residues 1–33 (MEESQQQSTKFDAPPSPYVPSRVYLAQIYWKKP) lie on the Cytoplasmic side of the membrane. Residues 34–54 (AIVVLRVLQFVFSLIAFSVMA) form a helical membrane-spanning segment. Residues 55-72 (DLLHDVQGSIKSLSYTVA) lie on the Extracellular side of the membrane. A helical transmembrane segment spans residues 73-93 (IGVLACAYALAQLSFSLWCVI). Residues 94 to 118 (RGATSSSGVTPLYQYATFICDQMST) are Cytoplasmic-facing. The chain crosses the membrane as a helical span at residues 119-139 (YFLISAASATATLIDVSGVCG). Residues 140–156 (SNGSGTNLCSRSTASVT) lie on the Extracellular side of the membrane. Asn-141 carries N-linked (GlcNAc...) asparagine glycosylation. The chain crosses the membrane as a helical span at residues 157 to 177 (FAFLAFLAFSASSVLTGYYLV). The Cytoplasmic portion of the chain corresponds to 178-183 (KCILKA).

The protein belongs to the Casparian strip membrane proteins (CASP) family. Homodimer and heterodimers.

Its subcellular location is the cell membrane. This Selaginella moellendorffii (Spikemoss) protein is CASP-like protein UU1.